The sequence spans 251 residues: tRNA (guanine-N(1)-)-methyltransferase (251 aa).

Residues Gly117 and 137 to 142 contribute to the S-adenosyl-L-methionine site; that span reads IGDYVL.

This sequence belongs to the RNA methyltransferase TrmD family. Homodimer.

It is found in the cytoplasm. The enzyme catalyses guanosine(37) in tRNA + S-adenosyl-L-methionine = N(1)-methylguanosine(37) in tRNA + S-adenosyl-L-homocysteine + H(+). In terms of biological role, specifically methylates guanosine-37 in various tRNAs. The polypeptide is tRNA (guanine-N(1)-)-methyltransferase (Actinobacillus pleuropneumoniae serotype 5b (strain L20)).